Consider the following 158-residue polypeptide: DNA-binding transcriptional repressor RacR (158 aa).

In terms of assembly, homooctamer.

Its function is as follows. Transcriptional regulator that represses the expression of ydaS and ydaT under normal physiological conditions. It binds to its own upstream sequence and represses the adjacent and divergently coded ydaS-ydaT operon. RacR-mediated down-regulation of ydaS and ydaT may be critical for cell survival. RacR ensures that the prophage DNA is maintained in the genome. When the expression of the racR gene is reduced, the prophage Rac is excised from the genome, possibly to counteract the lethal toxicity of YdaT. This chain is DNA-binding transcriptional repressor RacR (racR), found in Escherichia coli (strain K12).